The chain runs to 592 residues: Arginine--tRNA ligase (592 aa).

Positions 134 to 144 match the 'HIGH' region motif; it reads ANPTGPLHVGH.

The protein belongs to the class-I aminoacyl-tRNA synthetase family. Monomer.

The protein localises to the cytoplasm. The enzyme catalyses tRNA(Arg) + L-arginine + ATP = L-arginyl-tRNA(Arg) + AMP + diphosphate. The polypeptide is Arginine--tRNA ligase (Coxiella burnetii (strain RSA 493 / Nine Mile phase I)).